Consider the following 247-residue polypeptide: Uridylate kinase (247 aa).

15–18 (KLSG) contributes to the ATP binding site. Residues 23–28 (GDEGFG) form an involved in allosteric activation by GTP region. Glycine 57 serves as a coordination point for UMP. Residues glycine 58 and arginine 62 each contribute to the ATP site. Residues aspartate 77 and 138 to 145 (TGNPFFTT) contribute to the UMP site. Positions 165, 171, and 174 each coordinate ATP.

The protein belongs to the UMP kinase family. In terms of assembly, homohexamer.

The protein resides in the cytoplasm. It carries out the reaction UMP + ATP = UDP + ADP. It functions in the pathway pyrimidine metabolism; CTP biosynthesis via de novo pathway; UDP from UMP (UMPK route): step 1/1. Its activity is regulated as follows. Allosterically activated by GTP. Inhibited by UTP. In terms of biological role, catalyzes the reversible phosphorylation of UMP to UDP. This chain is Uridylate kinase, found in Colwellia psychrerythraea (strain 34H / ATCC BAA-681) (Vibrio psychroerythus).